Here is a 279-residue protein sequence, read N- to C-terminus: Armadillo repeat-containing protein 1 (279 aa).

An ARM repeat occupies 36–78 (GCLPGLILFLDHPSPPVVHSALLALRYLAECRANREKMKGELG). The disordered stretch occupies residues 236–257 (EYLPEDESPSKEQDKAVSRVGS). Basic and acidic residues predominate over residues 243–252 (SPSKEQDKAV).

Interacts with mitochondrial contact site and cristae organizing system (MICOS) complex components IMMT/MIC60 and MICOS10/MIC10. Interacts with mitochondrial outer membrane sorting assembly machinery (SAM) complex components SAMM50 and MTX1.

The protein resides in the cytoplasm. Its subcellular location is the mitochondrion. It localises to the mitochondrion outer membrane. Its function is as follows. In association with mitochondrial contact site and cristae organizing system (MICOS) complex components and mitochondrial outer membrane sorting assembly machinery (SAM) complex components may regulate mitochondrial dynamics playing a role in determining mitochondrial length, distribution and motility. The protein is Armadillo repeat-containing protein 1 (ARMC1) of Gallus gallus (Chicken).